Consider the following 200-residue polypeptide: Peptidyl-tRNA hydrolase (200 aa).

Y15 contributes to the tRNA binding site. The active-site Proton acceptor is the H20. Residues Y66, N68, and N114 each contribute to the tRNA site.

This sequence belongs to the PTH family. In terms of assembly, monomer.

It is found in the cytoplasm. It carries out the reaction an N-acyl-L-alpha-aminoacyl-tRNA + H2O = an N-acyl-L-amino acid + a tRNA + H(+). Hydrolyzes ribosome-free peptidyl-tRNAs (with 1 or more amino acids incorporated), which drop off the ribosome during protein synthesis, or as a result of ribosome stalling. Its function is as follows. Catalyzes the release of premature peptidyl moieties from peptidyl-tRNA molecules trapped in stalled 50S ribosomal subunits, and thus maintains levels of free tRNAs and 50S ribosomes. The protein is Peptidyl-tRNA hydrolase of Paraburkholderia phymatum (strain DSM 17167 / CIP 108236 / LMG 21445 / STM815) (Burkholderia phymatum).